The sequence spans 224 residues: RNA-free ribonuclease P (224 aa).

The protein belongs to the HARP family.

It carries out the reaction Endonucleolytic cleavage of RNA, removing 5'-extranucleotides from tRNA precursor.. Its function is as follows. RNA-free RNase P that catalyzes the removal of the 5'-leader sequence from pre-tRNA to produce the mature 5'-terminus. The chain is RNA-free ribonuclease P from Haloarcula marismortui (strain ATCC 43049 / DSM 3752 / JCM 8966 / VKM B-1809) (Halobacterium marismortui).